We begin with the raw amino-acid sequence, 640 residues long: Chaperone protein HtpG (640 aa).

Residues 1–352 (MTEQTATQNY…SADLPLNVSR (352 aa)) are a; substrate-binding. Residues 353-571 (ELLQESRDVK…DGELSPQLIR (219 aa)) are b. The interval 572–640 (MLKQAGQAVP…VKRINSLLLK (69 aa)) is c.

It belongs to the heat shock protein 90 family. In terms of assembly, homodimer.

The protein resides in the cytoplasm. In terms of biological role, molecular chaperone. Has ATPase activity. The chain is Chaperone protein HtpG from Acinetobacter baylyi (strain ATCC 33305 / BD413 / ADP1).